A 283-amino-acid chain; its full sequence is NFU1 iron-sulfur cluster scaffold homolog, mitochondrial (283 aa).

Residues 1 to 65 (MSKFLSQAAI…ELRMPVACRR (65 aa)) constitute a mitochondrion transit peptide. The tract at residues 182-250 (IKELLDTRIR…IPEVESVEQV (69 aa)) is nifU. Cys-219 and Cys-222 together coordinate [4Fe-4S] cluster.

This sequence belongs to the NifU family.

The protein localises to the mitochondrion. In terms of biological role, molecular scaffold for [Fe-S] cluster assembly of mitochondrial iron-sulfur proteins. In Drosophila simulans (Fruit fly), this protein is NFU1 iron-sulfur cluster scaffold homolog, mitochondrial.